The primary structure comprises 133 residues: uncharacterized protein (133 aa).

This is an uncharacterized protein from Homo sapiens (Human).